A 223-amino-acid polypeptide reads, in one-letter code: Deoxyribose-phosphate aldolase (223 aa).

D89 (proton donor/acceptor) is an active-site residue. The active-site Schiff-base intermediate with acetaldehyde is the K152. K181 acts as the Proton donor/acceptor in catalysis.

It belongs to the DeoC/FbaB aldolase family. DeoC type 1 subfamily.

The protein localises to the cytoplasm. It catalyses the reaction 2-deoxy-D-ribose 5-phosphate = D-glyceraldehyde 3-phosphate + acetaldehyde. It functions in the pathway carbohydrate degradation; 2-deoxy-D-ribose 1-phosphate degradation; D-glyceraldehyde 3-phosphate and acetaldehyde from 2-deoxy-alpha-D-ribose 1-phosphate: step 2/2. Its function is as follows. Catalyzes a reversible aldol reaction between acetaldehyde and D-glyceraldehyde 3-phosphate to generate 2-deoxy-D-ribose 5-phosphate. The sequence is that of Deoxyribose-phosphate aldolase from Listeria monocytogenes serovar 1/2a (strain ATCC BAA-679 / EGD-e).